Consider the following 227-residue polypeptide: Cytochrome c oxidase subunit 2 (227 aa).

At 1–14 (MAHSFQLGFQDATS) the chain is on the mitochondrial intermembrane side. A helical transmembrane segment spans residues 15-45 (PIMEELLHFHDHTLMIVFLISSLVLYIITLM). Over 46–59 (LTTKLTHTSTMDAQ) the chain is Mitochondrial matrix. The helical transmembrane segment at 60 to 87 (EVETVWTILPAIILILIALPSLRILYLM) threads the bilayer. Residues 88–227 (DEINTPSLTV…HFENWSTSMI (140 aa)) lie on the Mitochondrial intermembrane side of the membrane. 6 residues coordinate Cu cation: His161, Cys196, Glu198, Cys200, His204, and Met207. Glu198 is a Mg(2+) binding site.

Belongs to the cytochrome c oxidase subunit 2 family. As to quaternary structure, component of the cytochrome c oxidase (complex IV, CIV), a multisubunit enzyme composed of 14 subunits. The complex is composed of a catalytic core of 3 subunits MT-CO1, MT-CO2 and MT-CO3, encoded in the mitochondrial DNA, and 11 supernumerary subunits COX4I, COX5A, COX5B, COX6A, COX6B, COX6C, COX7A, COX7B, COX7C, COX8 and NDUFA4, which are encoded in the nuclear genome. The complex exists as a monomer or a dimer and forms supercomplexes (SCs) in the inner mitochondrial membrane with NADH-ubiquinone oxidoreductase (complex I, CI) and ubiquinol-cytochrome c oxidoreductase (cytochrome b-c1 complex, complex III, CIII), resulting in different assemblies (supercomplex SCI(1)III(2)IV(1) and megacomplex MCI(2)III(2)IV(2)). Found in a complex with TMEM177, COA6, COX18, COX20, SCO1 and SCO2. Interacts with TMEM177 in a COX20-dependent manner. Interacts with COX20. Interacts with COX16. Requires Cu cation as cofactor.

The protein resides in the mitochondrion inner membrane. It carries out the reaction 4 Fe(II)-[cytochrome c] + O2 + 8 H(+)(in) = 4 Fe(III)-[cytochrome c] + 2 H2O + 4 H(+)(out). Its function is as follows. Component of the cytochrome c oxidase, the last enzyme in the mitochondrial electron transport chain which drives oxidative phosphorylation. The respiratory chain contains 3 multisubunit complexes succinate dehydrogenase (complex II, CII), ubiquinol-cytochrome c oxidoreductase (cytochrome b-c1 complex, complex III, CIII) and cytochrome c oxidase (complex IV, CIV), that cooperate to transfer electrons derived from NADH and succinate to molecular oxygen, creating an electrochemical gradient over the inner membrane that drives transmembrane transport and the ATP synthase. Cytochrome c oxidase is the component of the respiratory chain that catalyzes the reduction of oxygen to water. Electrons originating from reduced cytochrome c in the intermembrane space (IMS) are transferred via the dinuclear copper A center (CU(A)) of subunit 2 and heme A of subunit 1 to the active site in subunit 1, a binuclear center (BNC) formed by heme A3 and copper B (CU(B)). The BNC reduces molecular oxygen to 2 water molecules using 4 electrons from cytochrome c in the IMS and 4 protons from the mitochondrial matrix. The chain is Cytochrome c oxidase subunit 2 (MT-CO2) from Cephalopachus bancanus (Western tarsier).